Reading from the N-terminus, the 456-residue chain is Imidazolonepropionase (456 aa).

2 residues coordinate Fe(3+): His-104 and His-106. Residues His-104 and His-106 each coordinate Zn(2+). Arg-113, Tyr-176, and His-209 together coordinate 4-imidazolone-5-propanoate. Tyr-176 contacts N-formimidoyl-L-glutamate. His-274 provides a ligand contact to Fe(3+). A Zn(2+)-binding site is contributed by His-274. Gln-277 is a 4-imidazolone-5-propanoate binding site. Asp-349 provides a ligand contact to Fe(3+). Asp-349 is a binding site for Zn(2+). Residues Asn-351 and Gly-353 each contribute to the N-formimidoyl-L-glutamate site. Ser-354 is a binding site for 4-imidazolone-5-propanoate.

It belongs to the metallo-dependent hydrolases superfamily. HutI family. Requires Zn(2+) as cofactor. Fe(3+) serves as cofactor.

It is found in the cytoplasm. The enzyme catalyses 4-imidazolone-5-propanoate + H2O = N-formimidoyl-L-glutamate. It functions in the pathway amino-acid degradation; L-histidine degradation into L-glutamate; N-formimidoyl-L-glutamate from L-histidine: step 3/3. Functionally, catalyzes the hydrolytic cleavage of the carbon-nitrogen bond in imidazolone-5-propanoate to yield N-formimidoyl-L-glutamate. It is the third step in the universal histidine degradation pathway. This Verminephrobacter eiseniae (strain EF01-2) protein is Imidazolonepropionase.